Here is a 346-residue protein sequence, read N- to C-terminus: Phosphoribosylformylglycinamidine cyclo-ligase (346 aa).

This sequence belongs to the AIR synthase family.

The protein resides in the cytoplasm. It catalyses the reaction 2-formamido-N(1)-(5-O-phospho-beta-D-ribosyl)acetamidine + ATP = 5-amino-1-(5-phospho-beta-D-ribosyl)imidazole + ADP + phosphate + H(+). The protein operates within purine metabolism; IMP biosynthesis via de novo pathway; 5-amino-1-(5-phospho-D-ribosyl)imidazole from N(2)-formyl-N(1)-(5-phospho-D-ribosyl)glycinamide: step 2/2. This Colwellia psychrerythraea (strain 34H / ATCC BAA-681) (Vibrio psychroerythus) protein is Phosphoribosylformylglycinamidine cyclo-ligase.